Reading from the N-terminus, the 93-residue chain is Protein IDA-LIKE 4 (93 aa).

The signal sequence occupies residues 1–35 (MYPTRPHYWRRRLSINRPQAFLLLILCLFFIHHCD).

In terms of tissue distribution, expressed in mainly in buds. Lower levels in roots. Detected at the base of pedicel, in the floral and funicule abscission zones, in vascular tissues, in guard cells of young seedlings and in hydathodes.

Its subcellular location is the secreted. The protein localises to the extracellular space. May be involved in floral abscission. The polypeptide is Protein IDA-LIKE 4 (IDL4) (Arabidopsis thaliana (Mouse-ear cress)).